The primary structure comprises 680 residues: UvrABC system protein B (680 aa).

The Helicase ATP-binding domain occupies A27–E422. G40–T47 provides a ligand contact to ATP. The Beta-hairpin signature appears at Y93–I116. The Helicase C-terminal domain maps to Q443 to S609. The region spanning P641–R676 is the UVR domain.

Belongs to the UvrB family. As to quaternary structure, forms a heterotetramer with UvrA during the search for lesions. Interacts with UvrC in an incision complex.

The protein localises to the cytoplasm. In terms of biological role, the UvrABC repair system catalyzes the recognition and processing of DNA lesions. A damage recognition complex composed of 2 UvrA and 2 UvrB subunits scans DNA for abnormalities. Upon binding of the UvrA(2)B(2) complex to a putative damaged site, the DNA wraps around one UvrB monomer. DNA wrap is dependent on ATP binding by UvrB and probably causes local melting of the DNA helix, facilitating insertion of UvrB beta-hairpin between the DNA strands. Then UvrB probes one DNA strand for the presence of a lesion. If a lesion is found the UvrA subunits dissociate and the UvrB-DNA preincision complex is formed. This complex is subsequently bound by UvrC and the second UvrB is released. If no lesion is found, the DNA wraps around the other UvrB subunit that will check the other stand for damage. This chain is UvrABC system protein B, found in Gloeobacter violaceus (strain ATCC 29082 / PCC 7421).